The chain runs to 172 residues: Histone H1-like protein HC2 (172 aa).

Residues 1-77 (MIGAQKKQSG…TVAKKPAVKK (77 aa)) form a disordered region. The segment covering 8–77 (QSGKKTASRA…TVAKKPAVKK (70 aa)) has biased composition (basic residues).

Belongs to the histone H1/H5 family. HCT subfamily.

Functionally, might have a role in establishing the nucleoid structure of elementary bodies. The protein is Histone H1-like protein HC2 (hctB) of Chlamydia pneumoniae (Chlamydophila pneumoniae).